The sequence spans 554 residues: Oxygen-dependent choline dehydrogenase (554 aa).

4 to 33 (DYIIIGAGSAGNVLATRLTEDPNTTVLLLE) contacts FAD. His473 (proton acceptor) is an active-site residue.

This sequence belongs to the GMC oxidoreductase family. FAD is required as a cofactor.

The enzyme catalyses choline + A = betaine aldehyde + AH2. It carries out the reaction betaine aldehyde + NAD(+) + H2O = glycine betaine + NADH + 2 H(+). The protein operates within amine and polyamine biosynthesis; betaine biosynthesis via choline pathway; betaine aldehyde from choline (cytochrome c reductase route): step 1/1. Involved in the biosynthesis of the osmoprotectant glycine betaine. Catalyzes the oxidation of choline to betaine aldehyde and betaine aldehyde to glycine betaine at the same rate. The chain is Oxygen-dependent choline dehydrogenase from Klebsiella pneumoniae subsp. pneumoniae (strain ATCC 700721 / MGH 78578).